A 365-amino-acid polypeptide reads, in one-letter code: Transcription elongation factor, mitochondrial (365 aa).

The N-terminal 40 residues, Met1–Lys40, are a transit peptide targeting the mitochondrion.

The protein belongs to the TEFM family. In terms of assembly, interacts with POLRMT.

It localises to the mitochondrion matrix. Its subcellular location is the mitochondrion nucleoid. Transcription elongation factor which increases mitochondrial RNA polymerase processivity. Regulates transcription of the mitochondrial genome, including genes important for the oxidative phosphorylation machinery. This Rattus norvegicus (Rat) protein is Transcription elongation factor, mitochondrial (Tefm).